The sequence spans 212 residues: Large ribosomal subunit protein uL3 (212 aa).

N5-methylglutamine is present on Gln-153.

Belongs to the universal ribosomal protein uL3 family. In terms of assembly, part of the 50S ribosomal subunit. Forms a cluster with proteins L14 and L19. Methylated by PrmB.

One of the primary rRNA binding proteins, it binds directly near the 3'-end of the 23S rRNA, where it nucleates assembly of the 50S subunit. The polypeptide is Large ribosomal subunit protein uL3 (Shewanella piezotolerans (strain WP3 / JCM 13877)).